A 166-amino-acid chain; its full sequence is Endoribonuclease YbeY (166 aa).

Residues His-129, His-133, and His-139 each coordinate Zn(2+).

This sequence belongs to the endoribonuclease YbeY family. It depends on Zn(2+) as a cofactor.

The protein localises to the cytoplasm. Single strand-specific metallo-endoribonuclease involved in late-stage 70S ribosome quality control and in maturation of the 3' terminus of the 16S rRNA. This Mesorhizobium japonicum (strain LMG 29417 / CECT 9101 / MAFF 303099) (Mesorhizobium loti (strain MAFF 303099)) protein is Endoribonuclease YbeY.